The chain runs to 259 residues: MTAVHSLPADVQAQVSAAEWQTRVDLAACYRLVALHGWDDLIFTHISAKVPGTEDFLINPFGLMFHEITASSLVKVDASGKKLMDSPYEINPAGYTIHSAVHEVRHDVECVLHTHTAAGIAVSCQKQGLLPLSQQSLFVLSSLSYHAYEGVALNHEEKARLQADLGASNFLILPNHGLLTCGGSIADTFLMMFTLQRACEVQVMAQSGGAELIHIPGQILAGARDMIAGVMRSKTGMGGQLAWPALLRKLDQQNPGYRQ.

Residues His113, His115, and His176 each coordinate Zn(2+).

This sequence belongs to the aldolase class II family. Requires Zn(2+) as cofactor.

This is Putative aldolase class 2 protein PA3430 from Pseudomonas aeruginosa (strain ATCC 15692 / DSM 22644 / CIP 104116 / JCM 14847 / LMG 12228 / 1C / PRS 101 / PAO1).